Here is a 67-residue protein sequence, read N- to C-terminus: MDIADIESRSSQELHEILVNLRKEFVNLVFQKKLGQCNNISRFSLIRKSIARILTTLNKRRREEKNA.

It belongs to the universal ribosomal protein uL29 family.

The sequence is that of Large ribosomal subunit protein uL29 from Wolbachia sp. subsp. Drosophila simulans (strain wRi).